The chain runs to 368 residues: Flagellar P-ring protein 1 (368 aa).

The first 24 residues, 1–24 (MIFKQIRRLIAAALLAALSLPAAA), serve as a signal peptide directing secretion.

It belongs to the FlgI family. As to quaternary structure, the basal body constitutes a major portion of the flagellar organelle and consists of four rings (L,P,S, and M) mounted on a central rod.

The protein localises to the periplasm. Its subcellular location is the bacterial flagellum basal body. Its function is as follows. Assembles around the rod to form the L-ring and probably protects the motor/basal body from shearing forces during rotation. This Chromobacterium violaceum (strain ATCC 12472 / DSM 30191 / JCM 1249 / CCUG 213 / NBRC 12614 / NCIMB 9131 / NCTC 9757 / MK) protein is Flagellar P-ring protein 1.